Here is a 558-residue protein sequence, read N- to C-terminus: Large cysteine-rich periplasmic protein OmcB (558 aa).

The N-terminal stretch at 1–24 (MSKLIRRVVTVLALTSMASSFASG) is a signal peptide. A propeptide spanning residues 25–40 (KTEVAAAESLVTRFIA) is cleaved from the precursor.

As to quaternary structure, part of a disulfide cross-linked outer membrane complex (COMC) composed of the major outer membrane porin (MOMP), the small cysteine-rich protein (OmcA) and the large cysteine-rich periplasmic protein (OmcB).

The protein resides in the periplasm. In terms of biological role, in elementary bodies (EBs, the infectious stage, which is able to survive outside the host cell) provides the structural integrity of the outer envelope through disulfide cross-links with the small cysteine-rich protein and the major outer membrane porin. It has been described in publications as the Sarkosyl-insoluble COMC (Chlamydia outer membrane complex), and serves as the functional equivalent of peptidoglycan. It is present but the disulfide bonds are reduced in reticulate bodies (RBs). This chain is Large cysteine-rich periplasmic protein OmcB (omcB), found in Chlamydia felis (strain Fe/C-56) (Chlamydophila felis).